A 319-amino-acid polypeptide reads, in one-letter code: Translocon-associated protein subunit alpha (319 aa).

Positions 1 to 21 (MRLLPRLLLLFLLAFPAAVLL) are cleaved as a signal peptide. Topologically, residues 22 to 208 (RGGPGGSLAV…EREDGLDGET (187 aa)) are lumenal. Residues 35 to 76 (LTEDEETVEDPIIEDEDDEAEVEEDEPTDLAEEKEEEEDVSS) are compositionally biased toward acidic residues. Residues 35–84 (LTEDEETVEDPIIEDEDDEAEVEEDEPTDLAEEKEEEEDVSSEPEASPSA) form a disordered region. 2 N-linked (GlcNAc...) asparagine glycosylation sites follow: Asn137 and Asn192. A helical membrane pass occupies residues 209–229 (IFMYMFLAGLGLLVVVGLHQL). Residues 230–319 (LESRKRKRPI…SLRQLAVCGI (90 aa)) are Cytoplasmic-facing. At Ser248 the chain carries Phosphoserine. Thr261 is modified (phosphothreonine).

The protein belongs to the TRAP-alpha family. In terms of assembly, heterotetramer of TRAP-alpha, TRAP-beta, TRAP-delta and TRAP-gamma. Interacts with palmitoylated calnexin (CALX), the interaction is required for efficient folding of glycosylated proteins.

The protein localises to the endoplasmic reticulum membrane. Functionally, TRAP proteins are part of a complex whose function is to bind calcium to the ER membrane and thereby regulate the retention of ER resident proteins. May be involved in the recycling of the translocation apparatus after completion of the translocation process or may function as a membrane-bound chaperone facilitating folding of translocated proteins. In Rattus norvegicus (Rat), this protein is Translocon-associated protein subunit alpha (Ssr1).